Consider the following 552-residue polypeptide: Terpene synthase 5 (552 aa).

Residues Asp307, Asp311, and Glu457 each coordinate Mg(2+). The DDXXD motif signature appears at 307 to 311; that stretch reads DDTYD.

The protein belongs to the terpene synthase family. Mg(2+) is required as a cofactor.

Catalyzes the cyclization of farnesyl diphosphate to multiple sesquiterpenes, such as olefins and sesquiterpene alcohols. This Ricinus communis (Castor bean) protein is Terpene synthase 5 (TPS5).